The following is a 625-amino-acid chain: 1-deoxy-D-xylulose-5-phosphate synthase (625 aa).

Thiamine diphosphate is bound by residues H84 and 125 to 127 (GHS). Mg(2+) is bound at residue D156. Residues 157-158 (GA), N185, F292, and E373 each bind thiamine diphosphate. Residue N185 coordinates Mg(2+).

The protein belongs to the transketolase family. DXPS subfamily. Homodimer. Mg(2+) is required as a cofactor. Requires thiamine diphosphate as cofactor.

The enzyme catalyses D-glyceraldehyde 3-phosphate + pyruvate + H(+) = 1-deoxy-D-xylulose 5-phosphate + CO2. Its pathway is metabolic intermediate biosynthesis; 1-deoxy-D-xylulose 5-phosphate biosynthesis; 1-deoxy-D-xylulose 5-phosphate from D-glyceraldehyde 3-phosphate and pyruvate: step 1/1. Catalyzes the acyloin condensation reaction between C atoms 2 and 3 of pyruvate and glyceraldehyde 3-phosphate to yield 1-deoxy-D-xylulose-5-phosphate (DXP). This Marinomonas sp. (strain MWYL1) protein is 1-deoxy-D-xylulose-5-phosphate synthase.